We begin with the raw amino-acid sequence, 158 residues long: 6,7-dimethyl-8-ribityllumazine synthase (158 aa).

Residues Phe22, 57-59 (AYE), and 84-86 (TVI) contribute to the 5-amino-6-(D-ribitylamino)uracil site. (2S)-2-hydroxy-3-oxobutyl phosphate is bound at residue 89-90 (GT). The active-site Proton donor is His92. Phe117 contacts 5-amino-6-(D-ribitylamino)uracil. Arg131 serves as a coordination point for (2S)-2-hydroxy-3-oxobutyl phosphate.

This sequence belongs to the DMRL synthase family. As to quaternary structure, forms an icosahedral capsid composed of 60 subunits, arranged as a dodecamer of pentamers.

The enzyme catalyses (2S)-2-hydroxy-3-oxobutyl phosphate + 5-amino-6-(D-ribitylamino)uracil = 6,7-dimethyl-8-(1-D-ribityl)lumazine + phosphate + 2 H2O + H(+). Its pathway is cofactor biosynthesis; riboflavin biosynthesis; riboflavin from 2-hydroxy-3-oxobutyl phosphate and 5-amino-6-(D-ribitylamino)uracil: step 1/2. Catalyzes the formation of 6,7-dimethyl-8-ribityllumazine by condensation of 5-amino-6-(D-ribitylamino)uracil with 3,4-dihydroxy-2-butanone 4-phosphate. This is the penultimate step in the biosynthesis of riboflavin. The chain is 6,7-dimethyl-8-ribityllumazine synthase from Pectobacterium carotovorum subsp. carotovorum (strain PC1).